Reading from the N-terminus, the 780-residue chain is ATP-dependent 6-phosphofructokinase, liver type (780 aa).

Residue alanine 2 is modified to N-acetylalanine. Positions 2-390 (ASVDLEKLRT…NWNIYKLLSH (389 aa)) are N-terminal catalytic PFK domain 1. Residues glycine 25, 88-89 (RC), and 118-121 (GDGS) contribute to the ATP site. Residue aspartate 119 coordinates Mg(2+). Residues 164–166 (SID), arginine 201, 208–210 (MGR), glutamate 264, arginine 292, and 298–301 (HVQR) contribute to the substrate site. Catalysis depends on aspartate 166, which acts as the Proton acceptor. Phosphoserine is present on serine 377. Positions 391–400 (QKISKEKTNF) are interdomain linker. The segment at 401–780 (SLAILNVGAP…RRTLSIETGF (380 aa)) is C-terminal regulatory PFK domain 2. Beta-D-fructose 2,6-bisphosphate is bound by residues arginine 470, 527-531 (TISNN), arginine 565, 572-574 (MGG), and glutamate 628. Serine 529 carries an O-linked (GlcNAc) serine glycan. Tyrosine 640 is subject to Phosphotyrosine. Residues arginine 654, 660-663 (HLQQ), and arginine 734 each bind beta-D-fructose 2,6-bisphosphate. Serine 775 is subject to Phosphoserine.

The protein belongs to the phosphofructokinase type A (PFKA) family. ATP-dependent PFK group I subfamily. Eukaryotic two domain clade 'E' sub-subfamily. Homo- and heterotetramers. Phosphofructokinase (PFK) enzyme functions as a tetramer composed of different combinations of 3 types of subunits, called PFKM (M), PFKL (L) and PFKP (P). The composition of the PFK tetramer differs according to the tissue type it is present in. The kinetic and regulatory properties of the tetrameric enzyme are dependent on the subunit composition, hence can vary across tissues. The cofactor is Mg(2+). GlcNAcylation at Ser-529 by OGT decreases enzyme activity, leading to redirect glucose flux through the oxidative pentose phosphate pathway. Glycosylation is stimulated by both hypoxia and glucose deprivation.

It localises to the cytoplasm. The catalysed reaction is beta-D-fructose 6-phosphate + ATP = beta-D-fructose 1,6-bisphosphate + ADP + H(+). It functions in the pathway carbohydrate degradation; glycolysis; D-glyceraldehyde 3-phosphate and glycerone phosphate from D-glucose: step 3/4. Allosterically activated by ADP, AMP, or fructose 2,6-bisphosphate, and allosterically inhibited by ATP or citrate. GlcNAcylation by OGT overcomes allosteric regulation. Functionally, catalyzes the phosphorylation of D-fructose 6-phosphate to fructose 1,6-bisphosphate by ATP, the first committing step of glycolysis. Negatively regulates the phagocyte oxidative burst in response to bacterial infection by controlling cellular NADPH biosynthesis and NADPH oxidase-derived reactive oxygen species. Upon macrophage activation, drives the metabolic switch toward glycolysis, thus preventing glucose turnover that produces NADPH via pentose phosphate pathway. The polypeptide is ATP-dependent 6-phosphofructokinase, liver type (PFKL) (Bos taurus (Bovine)).